Consider the following 105-residue polypeptide: Thioredoxin (105 aa).

A Thioredoxin domain is found at 1–105; the sequence is MASNVTDKSF…SLIEWINNNI (105 aa). A disulfide bridge links cysteine 30 with cysteine 33.

This sequence belongs to the thioredoxin family.

In terms of biological role, component of the thioredoxin-thioredoxin reductase system. Participates in various redox reactions through the reversible oxidation of its active center dithiol to a disulfide and catalyzes dithiol-disulfide exchange reactions. This Rickettsia bellii (strain RML369-C) protein is Thioredoxin (trxA).